The following is a 692-amino-acid chain: Elongation factor G (692 aa).

The tr-type G domain occupies 8-283 (DHVRNIGIMA…AVVDYFPSPS (276 aa)). GTP is bound by residues 17–24 (AHIDAGKT), 81–85 (DTPGH), and 135–138 (NKMD).

Belongs to the TRAFAC class translation factor GTPase superfamily. Classic translation factor GTPase family. EF-G/EF-2 subfamily.

It is found in the cytoplasm. Functionally, catalyzes the GTP-dependent ribosomal translocation step during translation elongation. During this step, the ribosome changes from the pre-translocational (PRE) to the post-translocational (POST) state as the newly formed A-site-bound peptidyl-tRNA and P-site-bound deacylated tRNA move to the P and E sites, respectively. Catalyzes the coordinated movement of the two tRNA molecules, the mRNA and conformational changes in the ribosome. In Magnetococcus marinus (strain ATCC BAA-1437 / JCM 17883 / MC-1), this protein is Elongation factor G.